The primary structure comprises 227 residues: AN1-type zinc finger protein 3 (227 aa).

The A20-type zinc-finger motif lies at 12–44 (PSLPPRCPCGFWGSSKTMNLCSKCFADFQKKQP). Residues Cys18, Cys20, Cys32, and Cys35 each contribute to the Zn(2+) site. Disordered stretches follow at residues 41–100 (KKQP…EECG) and 113–148 (PTKRSCGTDSQSENEASPVKRPRLLENTERSEETSR). Positions 49 to 59 (APSTSNSQSDL) are enriched in polar residues. Residues 66 to 77 (SDNNNTSITTPT) show a composition bias toward low complexity. Composition is skewed to polar residues over residues 78 to 94 (LSPSQQPLPTELNVTSP) and 113 to 127 (PTKRSCGTDSQSENE). Over residues 135–148 (RLLENTERSEETSR) the composition is skewed to basic and acidic residues. The segment at 151 to 200 (QKSRRRCFQCQTKLELVQQELGSCRCGYVFCMLHRLPEQHDCTFDHMGRG) adopts an AN1-type zinc-finger fold. Residues Cys157, Cys160, Cys174, Cys176, Cys181, His184, His190, and Cys192 each coordinate Zn(2+).

This Homo sapiens (Human) protein is AN1-type zinc finger protein 3 (ZFAND3).